We begin with the raw amino-acid sequence, 157 residues long: GDP-mannose mannosyl hydrolase (157 aa).

Residues 2-3, F8, and R36 each bind substrate; that span reads FL. In terms of domain architecture, Nudix hydrolase spans 3 to 153; the sequence is LRQEDFAAVV…SRAYFSPDAP (151 aa). 3 residues coordinate Mg(2+): G49, E69, and Q122. The Nudix box motif lies at 50–71; that stretch reads GRVCKDETLEAAFARLTQAELG.

The protein belongs to the Nudix hydrolase family. As to quaternary structure, homodimer. It depends on Mg(2+) as a cofactor.

The enzyme catalyses GDP-alpha-D-mannose + H2O = D-mannose + GDP + H(+). Hydrolyzes GDP-mannose. The polypeptide is GDP-mannose mannosyl hydrolase (Salmonella typhi).